Reading from the N-terminus, the 121-residue chain is Basic phospholipase A2 daboxin P (121 aa).

7 cysteine pairs are disulfide-bonded: Cys-26–Cys-115, Cys-28–Cys-44, Cys-43–Cys-95, Cys-49–Cys-121, Cys-50–Cys-88, Cys-57–Cys-81, and Cys-75–Cys-86. 3 residues coordinate Ca(2+): Tyr-27, Gly-29, and Gly-31. Residue His-47 is part of the active site. Residue Asp-48 coordinates Ca(2+). Residue Asp-89 is part of the active site.

It depends on Ca(2+) as a cofactor. In terms of tissue distribution, expressed by the venom gland.

It localises to the secreted. It carries out the reaction a 1,2-diacyl-sn-glycero-3-phosphocholine + H2O = a 1-acyl-sn-glycero-3-phosphocholine + a fatty acid + H(+). Its function is as follows. Snake venom phospholipase A2 (PLA2) that exhibits anticoagulant activity, probably by binding to factor X and its activated form factor Xa (F10). Shows no cytotoxicity. PLA2 catalyzes the calcium-dependent hydrolysis of the 2-acyl groups in 3-sn-phosphoglycerides. This is Basic phospholipase A2 daboxin P from Daboia russelii (Russel's viper).